The primary structure comprises 427 residues: Aspartate aminotransferase, mitochondrial (427 aa).

A mitochondrion-targeting transit peptide spans 1–26 (MALLKSRLLVGVARCQPCLAAVQGRA). Substrate is bound by residues G62, W159, and N212. An N6-(pyridoxal phosphate)lysine modification is found at K276. Residue R404 participates in substrate binding.

Belongs to the class-I pyridoxal-phosphate-dependent aminotransferase family. As to quaternary structure, homodimer. It depends on pyridoxal 5'-phosphate as a cofactor.

It localises to the mitochondrion matrix. It catalyses the reaction L-aspartate + 2-oxoglutarate = oxaloacetate + L-glutamate. The enzyme catalyses L-kynurenine + 2-oxoglutarate = kynurenate + L-glutamate + H2O. Its function is as follows. Catalyzes the irreversible transamination of the L-tryptophan metabolite L-kynurenine to form kynurenic acid (KA). As a member of the malate-aspartate shuttle, it has a key role in the intracellular NAD(H) redox balance. Is important for metabolite exchange between mitochondria and cytosol, and for amino acid metabolism. The protein is Aspartate aminotransferase, mitochondrial (got2) of Xenopus tropicalis (Western clawed frog).